Consider the following 269-residue polypeptide: Hydroxyethylthiazole kinase (269 aa).

Met46 is a substrate binding site. Positions 122 and 168 each coordinate ATP. Gly195 contributes to the substrate binding site.

The protein belongs to the Thz kinase family. It depends on Mg(2+) as a cofactor.

The enzyme catalyses 5-(2-hydroxyethyl)-4-methylthiazole + ATP = 4-methyl-5-(2-phosphooxyethyl)-thiazole + ADP + H(+). Its pathway is cofactor biosynthesis; thiamine diphosphate biosynthesis; 4-methyl-5-(2-phosphoethyl)-thiazole from 5-(2-hydroxyethyl)-4-methylthiazole: step 1/1. Its function is as follows. Catalyzes the phosphorylation of the hydroxyl group of 4-methyl-5-beta-hydroxyethylthiazole (THZ). The polypeptide is Hydroxyethylthiazole kinase (Geobacillus kaustophilus (strain HTA426)).